Here is a 397-residue protein sequence, read N- to C-terminus: Enoyl-[acyl-carrier-protein] reductase [NADH] (397 aa).

NAD(+) is bound by residues 48–53, 74–75, 111–112, and 139–140; these read GASTGY, FE, DA, and VA. Residue tyrosine 225 participates in substrate binding. Tyrosine 235 serves as the catalytic Proton donor. Residues lysine 244 and 273 to 275 contribute to the NAD(+) site; that span reads VVT.

Belongs to the TER reductase family. In terms of assembly, monomer.

It carries out the reaction a 2,3-saturated acyl-[ACP] + NAD(+) = a (2E)-enoyl-[ACP] + NADH + H(+). It functions in the pathway lipid metabolism; fatty acid biosynthesis. Its function is as follows. Involved in the final reduction of the elongation cycle of fatty acid synthesis (FAS II). Catalyzes the reduction of a carbon-carbon double bond in an enoyl moiety that is covalently linked to an acyl carrier protein (ACP). The polypeptide is Enoyl-[acyl-carrier-protein] reductase [NADH] (Burkholderia pseudomallei (strain K96243)).